A 312-amino-acid polypeptide reads, in one-letter code: MDILFYHPTFDTTWWINALREALPEAKVREWKCGDHDPADYALVWHPPVEMLAGRTLKAVFALGAGVDSILSKLQAHPEMLAPSVPLFRLEDTGMGEQMQEYAVSQVLHWFRRFDDYQALKNESRWEPLPEYRKEDFSIGIMGAGVLGSKVAESLKVWGFPLRCWSRSRKSWPGVESFAGKEELGAFLRKTRVLINLLPNTPETVGIINLHLLNQLQDNAYLLNLARGVHVVEDDLLIALNNGKLKGAMLDVFSREPLPAESPLWKHPRVAMTPHVAAVTRPAEAVAYISKTINRLEKGEPVTGQVDRIRGY.

Arg-227 is a catalytic residue. The active-site Proton donor is the His-275.

This sequence belongs to the D-isomer specific 2-hydroxyacid dehydrogenase family. GhrA subfamily.

The protein resides in the cytoplasm. It catalyses the reaction glycolate + NADP(+) = glyoxylate + NADPH + H(+). The enzyme catalyses (R)-glycerate + NAD(+) = 3-hydroxypyruvate + NADH + H(+). It carries out the reaction (R)-glycerate + NADP(+) = 3-hydroxypyruvate + NADPH + H(+). Functionally, catalyzes the NADPH-dependent reduction of glyoxylate and hydroxypyruvate into glycolate and glycerate, respectively. In Escherichia fergusonii (strain ATCC 35469 / DSM 13698 / CCUG 18766 / IAM 14443 / JCM 21226 / LMG 7866 / NBRC 102419 / NCTC 12128 / CDC 0568-73), this protein is Glyoxylate/hydroxypyruvate reductase A.